The sequence spans 406 residues: Phosphopentomutase (406 aa).

Mn(2+)-binding residues include Asp10, Asp305, His310, Asp346, His347, and His358.

The protein belongs to the phosphopentomutase family. It depends on Mn(2+) as a cofactor.

The protein localises to the cytoplasm. It carries out the reaction 2-deoxy-alpha-D-ribose 1-phosphate = 2-deoxy-D-ribose 5-phosphate. The catalysed reaction is alpha-D-ribose 1-phosphate = D-ribose 5-phosphate. Its pathway is carbohydrate degradation; 2-deoxy-D-ribose 1-phosphate degradation; D-glyceraldehyde 3-phosphate and acetaldehyde from 2-deoxy-alpha-D-ribose 1-phosphate: step 1/2. Functionally, isomerase that catalyzes the conversion of deoxy-ribose 1-phosphate (dRib-1-P) and ribose 1-phosphate (Rib-1-P) to deoxy-ribose 5-phosphate (dRib-5-P) and ribose 5-phosphate (Rib-5-P), respectively. This Sinorhizobium fredii (strain NBRC 101917 / NGR234) protein is Phosphopentomutase.